A 760-amino-acid chain; its full sequence is Serine/threonine-protein kinase dkf-1 (760 aa).

Phorbol-ester/DAG-type zinc fingers lie at residues 103–153 and 194–244; these read PHVV…GIIV and PHTL…PSNC. The region spanning 316–444 is the PH domain; the sequence is KNLEGWMIHF…QFIKESLQPP (129 aa). Positions 464–725 constitute a Protein kinase domain; the sequence is VLSDKTLGSG…IEKCLEHGWL (262 aa). ATP-binding positions include 470-478 and Lys-493; that span reads LGSGQFGTV. Catalysis depends on Asp-589, which acts as the Proton acceptor. The residue at position 626 (Thr-626) is a Phosphothreonine.

This sequence belongs to the protein kinase superfamily. CAMK Ser/Thr protein kinase family. PKD subfamily. Requires Mg(2+) as cofactor. In terms of processing, prolonged phosphorylation at Thr-626 results in ubiquitination and degradation.

It is found in the cytoplasm. Its subcellular location is the membrane. It carries out the reaction L-seryl-[protein] + ATP = O-phospho-L-seryl-[protein] + ADP + H(+). The catalysed reaction is L-threonyl-[protein] + ATP = O-phospho-L-threonyl-[protein] + ADP + H(+). Its activity is regulated as follows. Activated by DAG and phorbol esters. Phorbol-ester/DAG-type domain 1 binds phorbol ester with high affinity and mediates accumulation at the cell periphery. Phorbol-ester/DAG-type domain 2 binds phorbol ester with low affinity but may mediate initial contact, resulting in a conformational change allowing previously occluded domain 1 to anchor the kinase. Phosphorylation on Thr-626 is then also required for activation and may also result in a further conformational change. Functionally, converts transient diacylglycerol (DAG) signals into prolonged physiological effects, independently of PKC. Role in the regulation of growth and neuromuscular control of movement. Involved in immune response to S.aureus bacterium by activating transcription factor hlh-30 downstream of phospholipase plc-1. The sequence is that of Serine/threonine-protein kinase dkf-1 from Caenorhabditis briggsae.